The primary structure comprises 150 residues: Large ribosomal subunit protein bL9 (150 aa).

The protein belongs to the bacterial ribosomal protein bL9 family.

Functionally, binds to the 23S rRNA. This is Large ribosomal subunit protein bL9 from Shewanella sp. (strain MR-4).